Consider the following 268-residue polypeptide: MAVGKNKGLAKSGKKGLKKKIVDPFTRKDWYDVKAPSLFTNRDIGKTLVNRTAGTKIASDSLKGRVFEVSLADLQGESEAERSFRKFRLIAEEVQGRYLLTNFHGMDFTTDKLRSLVKKWQTLIECSVDVKTTDSYLLRVFCIGFTQKDQRSQRKTCYAQHTQVRAIRKKMTEIITKEISSGDLKEAVSKLIPDSIAKDIEKSCHSIYPIHEVYIRKVKVLKKPKFDMGKLLDMHGEGAVTKRVTTEDGTGVVISRPEGYEPPIQESV.

It belongs to the eukaryotic ribosomal protein eS1 family. Component of the small ribosomal subunit. Mature ribosomes consist of a small (40S) and a large (60S) subunit. The 40S subunit contains about 33 different proteins and 1 molecule of RNA (18S). The 60S subunit contains about 49 different proteins and 3 molecules of RNA (28S, 5.8S and 5S).

Its subcellular location is the cytoplasm. In Artemia franciscana (Brine shrimp), this protein is Small ribosomal subunit protein eS1.